The chain runs to 240 residues: Triosephosphate isomerase (240 aa).

Residue 9-11 (NWK) participates in substrate binding. Residue histidine 94 is the Electrophile of the active site. Glutamate 163 serves as the catalytic Proton acceptor. Residues glycine 169, serine 202, and 223–224 (GG) each bind substrate.

The protein belongs to the triosephosphate isomerase family. As to quaternary structure, homodimer.

The protein localises to the cytoplasm. The catalysed reaction is D-glyceraldehyde 3-phosphate = dihydroxyacetone phosphate. The protein operates within carbohydrate biosynthesis; gluconeogenesis. Its pathway is carbohydrate degradation; glycolysis; D-glyceraldehyde 3-phosphate from glycerone phosphate: step 1/1. Its function is as follows. Involved in the gluconeogenesis. Catalyzes stereospecifically the conversion of dihydroxyacetone phosphate (DHAP) to D-glyceraldehyde-3-phosphate (G3P). The chain is Triosephosphate isomerase from Gloeobacter violaceus (strain ATCC 29082 / PCC 7421).